Consider the following 349-residue polypeptide: Phosphoribosylformylglycinamidine cyclo-ligase (349 aa).

It belongs to the AIR synthase family.

It localises to the cytoplasm. It carries out the reaction 2-formamido-N(1)-(5-O-phospho-beta-D-ribosyl)acetamidine + ATP = 5-amino-1-(5-phospho-beta-D-ribosyl)imidazole + ADP + phosphate + H(+). The protein operates within purine metabolism; IMP biosynthesis via de novo pathway; 5-amino-1-(5-phospho-D-ribosyl)imidazole from N(2)-formyl-N(1)-(5-phospho-D-ribosyl)glycinamide: step 2/2. This Methanococcus vannielii (strain ATCC 35089 / DSM 1224 / JCM 13029 / OCM 148 / SB) protein is Phosphoribosylformylglycinamidine cyclo-ligase.